The following is a 348-amino-acid chain: Phenylalanine--tRNA ligase alpha subunit (348 aa).

Position 262 (glutamate 262) interacts with Mg(2+).

This sequence belongs to the class-II aminoacyl-tRNA synthetase family. Phe-tRNA synthetase alpha subunit type 1 subfamily. In terms of assembly, tetramer of two alpha and two beta subunits. The cofactor is Mg(2+).

The protein localises to the cytoplasm. The enzyme catalyses tRNA(Phe) + L-phenylalanine + ATP = L-phenylalanyl-tRNA(Phe) + AMP + diphosphate + H(+). This is Phenylalanine--tRNA ligase alpha subunit from Streptococcus pneumoniae (strain JJA).